We begin with the raw amino-acid sequence, 181 residues long: Inner membrane-spanning protein YciB (181 aa).

A run of 5 helical transmembrane segments spans residues 22–42 (IYTATGALIIATAIQLVVTYA), 50–70 (MQLITFIMVTVFGGMTIFLHD), 80–100 (IVYCVFAAGLIIAHILGKPVI), 122–142 (WVLFFTVCAIANLYVAFEMPL), and 148–168 (FKVFGLLGLTFLYTLFTGMYV).

This sequence belongs to the YciB family.

The protein resides in the cell inner membrane. Plays a role in cell envelope biogenesis, maintenance of cell envelope integrity and membrane homeostasis. The chain is Inner membrane-spanning protein YciB from Aliivibrio fischeri (strain MJ11) (Vibrio fischeri).